A 733-amino-acid chain; its full sequence is Alpha,alpha-trehalose-phosphate synthase [UDP-forming] A (733 aa).

It in the N-terminal section; belongs to the glycosyltransferase 20 family. The protein in the C-terminal section; belongs to the trehalose phosphatase family.

It catalyses the reaction D-glucose 6-phosphate + UDP-alpha-D-glucose = alpha,alpha-trehalose 6-phosphate + UDP + H(+). Synthesizes trehalose 6-phosphate, the precursor for the production of trehalose, the main carbohydrate storage reserve of the dormant spore. Trehalose accumulates in both prestalk and prespore cells and then is rapidly metabolized during terminal differentiation of stalk cells, while being stored in spores, where it serves as the principal energy and carbon source for germination. In Dictyostelium discoideum (Social amoeba), this protein is Alpha,alpha-trehalose-phosphate synthase [UDP-forming] A (tpsA).